We begin with the raw amino-acid sequence, 235 residues long: MTKAQNVDPSEIKKFEEMASRWWDLEGEFKPLHQINPLRLNYVLEKADGVFGKKVLDVGCGGGILAESMAKEGAVVTGLDMGKEPLEVARLHALEAGTKLTYIQSTIEDHAAENAGTYDVVTCMEMLEHVPDPLSVIRSCAALVKPSGHVFFSTLNRNMKSYLFAIVGAEKLLRIVPEGTHDHEKFIKPAEMMKMIDQTDLTEMGITGLHYNPLNDSYKLGRNVDVNYIVHTTKY.

Positions 39, 59, 80, and 124 each coordinate S-adenosyl-L-methionine.

Belongs to the methyltransferase superfamily. UbiG/COQ3 family.

The catalysed reaction is a 3-demethylubiquinol + S-adenosyl-L-methionine = a ubiquinol + S-adenosyl-L-homocysteine + H(+). It carries out the reaction a 3-(all-trans-polyprenyl)benzene-1,2-diol + S-adenosyl-L-methionine = a 2-methoxy-6-(all-trans-polyprenyl)phenol + S-adenosyl-L-homocysteine + H(+). The protein operates within cofactor biosynthesis; ubiquinone biosynthesis. Functionally, O-methyltransferase that catalyzes the 2 O-methylation steps in the ubiquinone biosynthetic pathway. In Vibrio campbellii (strain ATCC BAA-1116), this protein is Ubiquinone biosynthesis O-methyltransferase.